A 130-amino-acid chain; its full sequence is MTTLRSAVAKVSETWKMKIAQRSFFEKTIKDFNFNTGYYNQIGLRWHDIMPRNAVVEEAFRRLPREEREDMDFRLARATLLSANKTILSKEEWTKQEEDVPYLDPYIKLIERELRNKADWDNFISPRTYP.

Belongs to the UQCRB/QCR7 family. As to quaternary structure, component of the ubiquinol-cytochrome c oxidoreductase (cytochrome b-c1 complex, complex III, CIII), a multisubunit enzyme composed of 3 respiratory subunits cytochrome b, cytochrome c1 and Rieske protein, 2 core protein subunits, and additional low-molecular weight protein subunits. The complex exists as an obligatory dimer and forms supercomplexes (SCs) in the inner mitochondrial membrane with cytochrome c oxidase (complex IV, CIV).

The protein resides in the mitochondrion inner membrane. In terms of biological role, component of the ubiquinol-cytochrome c oxidoreductase, a multisubunit transmembrane complex that is part of the mitochondrial electron transport chain which drives oxidative phosphorylation. The respiratory chain contains 3 multisubunit complexes succinate dehydrogenase (complex II, CII), ubiquinol-cytochrome c oxidoreductase (cytochrome b-c1 complex, complex III, CIII) and cytochrome c oxidase (complex IV, CIV), that cooperate to transfer electrons derived from NADH and succinate to molecular oxygen, creating an electrochemical gradient over the inner membrane that drives transmembrane transport and the ATP synthase. The cytochrome b-c1 complex catalyzes electron transfer from ubiquinol to cytochrome c, linking this redox reaction to translocation of protons across the mitochondrial inner membrane, with protons being carried across the membrane as hydrogens on the quinol. In the process called Q cycle, 2 protons are consumed from the matrix, 4 protons are released into the intermembrane space and 2 electrons are passed to cytochrome c. The polypeptide is Cytochrome b-c1 complex subunit 7 (UBCRBP) (Echinococcus multilocularis (Fox tapeworm)).